A 309-amino-acid polypeptide reads, in one-letter code: Protease HtpX homolog (309 aa).

Transmembrane regions (helical) follow at residues 7–27 and 29–49; these read TTVL…MLGG and QGMM…YWYS. Histidine 131 is a Zn(2+) binding site. Glutamate 132 is an active-site residue. Histidine 135 serves as a coordination point for Zn(2+). 2 helical membrane passes run 141–161 and 182–202; these read ILIG…ASMA and IGLI…QMAI. Residue glutamate 207 participates in Zn(2+) binding. The interval 278–309 is disordered; sequence RHGSDSGTGNRDSSIRRRNMNTEAKAAWDRLR.

It belongs to the peptidase M48B family. Zn(2+) serves as cofactor.

The protein resides in the cell inner membrane. This Desulforapulum autotrophicum (strain ATCC 43914 / DSM 3382 / VKM B-1955 / HRM2) (Desulfobacterium autotrophicum) protein is Protease HtpX homolog.